The chain runs to 163 residues: Urease accessory protein UreE (163 aa).

Positions 134-163 (EAGAYGGGHRHHHDDDAPSIRQPARLRIHE) are disordered.

It belongs to the UreE family.

The protein localises to the cytoplasm. In terms of biological role, involved in urease metallocenter assembly. Binds nickel. Probably functions as a nickel donor during metallocenter assembly. The polypeptide is Urease accessory protein UreE (Methylobacillus flagellatus (strain ATCC 51484 / DSM 6875 / VKM B-1610 / KT)).